The sequence spans 783 residues: Putative ATP-dependent DNA helicase fml2 (783 aa).

One can recognise a Helicase ATP-binding domain in the interval 118–286; the sequence is FCEQALFHNL…KVVDCLHISK (169 aa). 131 to 138 is a binding site for ATP; the sequence is LPTGLGKT. The short motif at 234–237 is the DEAH box element; sequence DEAH. Positions 450-619 constitute a Helicase C-terminal domain; sequence KMNHLLELLK…GKKIALKKDV (170 aa).

It belongs to the DEAD box helicase family. DEAH subfamily. FANCM sub-subfamily.

Its subcellular location is the nucleus. The protein localises to the nucleolus. The enzyme catalyses ATP + H2O = ADP + phosphate + H(+). The chain is Putative ATP-dependent DNA helicase fml2 from Schizosaccharomyces pombe (strain 972 / ATCC 24843) (Fission yeast).